A 66-amino-acid polypeptide reads, in one-letter code: Ocellatin-PT4 (66 aa).

Residues 1-22 (MAFLKKSLFLVLFLGLVSLSIC) form the signal peptide. Positions 23–39 (DEEKRQDEDDDDDDDEE) are excised as a propeptide. V66 carries the post-translational modification Valine amide.

In terms of tissue distribution, expressed by the skin glands.

The protein localises to the secreted. Its function is as follows. Has antibacterial activity against Gram-negative bacteria E.coli ATCC 25922 (MIC=80 uM), K.pneumoniae ATCC 700603 (MIC=310 uM) and S.choleraesuis ATCC 14028 (MIC=310 uM). Shows no hemolytic activity and no cytotoxicity. This chain is Ocellatin-PT4, found in Leptodactylus pustulatus (Ceara white-lipped frog).